Reading from the N-terminus, the 153-residue chain is Large ribosomal subunit protein uL13 (153 aa).

This sequence belongs to the universal ribosomal protein uL13 family. As to quaternary structure, part of the 50S ribosomal subunit.

Functionally, this protein is one of the early assembly proteins of the 50S ribosomal subunit, although it is not seen to bind rRNA by itself. It is important during the early stages of 50S assembly. In Azorhizobium caulinodans (strain ATCC 43989 / DSM 5975 / JCM 20966 / LMG 6465 / NBRC 14845 / NCIMB 13405 / ORS 571), this protein is Large ribosomal subunit protein uL13.